The sequence spans 596 residues: Elongation factor 4 (596 aa).

A tr-type G domain is found at 2-184 (KHIRNFSIIA…EIVAKIPPPV (183 aa)). Residues 14–19 (DHGKST) and 131–134 (NKID) each bind GTP.

The protein belongs to the TRAFAC class translation factor GTPase superfamily. Classic translation factor GTPase family. LepA subfamily.

The protein localises to the cell inner membrane. The enzyme catalyses GTP + H2O = GDP + phosphate + H(+). Its function is as follows. Required for accurate and efficient protein synthesis under certain stress conditions. May act as a fidelity factor of the translation reaction, by catalyzing a one-codon backward translocation of tRNAs on improperly translocated ribosomes. Back-translocation proceeds from a post-translocation (POST) complex to a pre-translocation (PRE) complex, thus giving elongation factor G a second chance to translocate the tRNAs correctly. Binds to ribosomes in a GTP-dependent manner. In Shewanella denitrificans (strain OS217 / ATCC BAA-1090 / DSM 15013), this protein is Elongation factor 4.